A 502-amino-acid polypeptide reads, in one-letter code: tRNA (adenine(58)-N(1))-methyltransferase catalytic subunit trm61 (502 aa).

A disordered region spans residues 76–112 (TGSRGRKNQSSKKRKADDLDTPTSNKDEAQSSPGTPR). Positions 79–89 (RGRKNQSSKKR) are enriched in basic residues. S-adenosyl-L-methionine contacts are provided by residues 167 to 169 (SGS), glutamate 201, arginine 206, 229 to 230 (DV), and aspartate 254. Disordered regions lie at residues 365-417 (LLQE…DLGR) and 444-502 (EEDE…ETQS). Basic and acidic residues predominate over residues 385 to 394 (GKTEVEEKSL). The span at 403–412 (TTAAPSSTPS) shows a compositional bias: low complexity. Residues 475–494 (KREAKEKEVQEEAQKSEDVP) show a composition bias toward basic and acidic residues.

The protein belongs to the class I-like SAM-binding methyltransferase superfamily. TRM61 family. Heterotetramer; composed of two copies of TRM6 and two copies of TRM61.

The protein resides in the nucleus. The catalysed reaction is adenosine(58) in tRNA + S-adenosyl-L-methionine = N(1)-methyladenosine(58) in tRNA + S-adenosyl-L-homocysteine + H(+). In terms of biological role, catalytic subunit of tRNA (adenine-N(1)-)-methyltransferase, which catalyzes the formation of N(1)-methyladenine at position 58 (m1A58) in initiator methionyl-tRNA. This Aspergillus fumigatus (strain ATCC MYA-4609 / CBS 101355 / FGSC A1100 / Af293) (Neosartorya fumigata) protein is tRNA (adenine(58)-N(1))-methyltransferase catalytic subunit trm61 (trm61).